Reading from the N-terminus, the 608-residue chain is Kelch-like protein 10 (608 aa).

A BTB domain is found at 39–106; that stretch reads CDVVIKVNGF…AYTRTVPITP (68 aa). 6 Kelch repeats span residues 292 to 339, 340 to 386, 388 to 433, 434 to 480, 481 to 527, and 529 to 574; these read ILFA…YLKG, YVYI…VLSN, IYAM…TLYG, KVYI…AYGE, HVYA…VVDD, and LFVV…VVPG. Serine 501 carries the phosphoserine modification.

In terms of assembly, self-associates. Interacts with CUL3; indicative for the participation in an E3 ubiquitin ligase complex.

It is found in the cytoplasm. It participates in protein modification; protein ubiquitination. In terms of biological role, may be a substrate-specific adapter of a CUL3-based E3 ubiquitin-protein ligase complex which mediates the ubiquitination and subsequent proteasomal degradation of target proteins during spermatogenesis. This Rattus norvegicus (Rat) protein is Kelch-like protein 10 (Klhl10).